The sequence spans 736 residues: Phosphoribosylformylglycinamidine synthase subunit PurL (736 aa).

The active site involves histidine 48. ATP-binding residues include tyrosine 51 and lysine 90. Residue glutamate 92 participates in Mg(2+) binding. Residues 93–96 (SHNH) and arginine 115 contribute to the substrate site. Histidine 94 acts as the Proton acceptor in catalysis. Position 116 (aspartate 116) interacts with Mg(2+). Glutamine 239 is a binding site for substrate. Aspartate 267 serves as a coordination point for Mg(2+). Substrate is bound at residue 311 to 313 (ESQ). ATP is bound by residues aspartate 492 and glycine 529. Residue asparagine 530 participates in Mg(2+) binding. Serine 532 lines the substrate pocket.

It belongs to the FGAMS family. Monomer. Part of the FGAM synthase complex composed of 1 PurL, 1 PurQ and 2 PurS subunits.

It is found in the cytoplasm. The enzyme catalyses N(2)-formyl-N(1)-(5-phospho-beta-D-ribosyl)glycinamide + L-glutamine + ATP + H2O = 2-formamido-N(1)-(5-O-phospho-beta-D-ribosyl)acetamidine + L-glutamate + ADP + phosphate + H(+). It functions in the pathway purine metabolism; IMP biosynthesis via de novo pathway; 5-amino-1-(5-phospho-D-ribosyl)imidazole from N(2)-formyl-N(1)-(5-phospho-D-ribosyl)glycinamide: step 1/2. Part of the phosphoribosylformylglycinamidine synthase complex involved in the purines biosynthetic pathway. Catalyzes the ATP-dependent conversion of formylglycinamide ribonucleotide (FGAR) and glutamine to yield formylglycinamidine ribonucleotide (FGAM) and glutamate. The FGAM synthase complex is composed of three subunits. PurQ produces an ammonia molecule by converting glutamine to glutamate. PurL transfers the ammonia molecule to FGAR to form FGAM in an ATP-dependent manner. PurS interacts with PurQ and PurL and is thought to assist in the transfer of the ammonia molecule from PurQ to PurL. This chain is Phosphoribosylformylglycinamidine synthase subunit PurL, found in Bradyrhizobium sp. (strain ORS 278).